The following is a 304-amino-acid chain: UDP-3-O-acyl-N-acetylglucosamine deacetylase (304 aa).

Zn(2+) contacts are provided by H78, H237, and D241. The active-site Proton donor is H264.

It belongs to the LpxC family. It depends on Zn(2+) as a cofactor.

It carries out the reaction a UDP-3-O-[(3R)-3-hydroxyacyl]-N-acetyl-alpha-D-glucosamine + H2O = a UDP-3-O-[(3R)-3-hydroxyacyl]-alpha-D-glucosamine + acetate. It participates in glycolipid biosynthesis; lipid IV(A) biosynthesis; lipid IV(A) from (3R)-3-hydroxytetradecanoyl-[acyl-carrier-protein] and UDP-N-acetyl-alpha-D-glucosamine: step 2/6. Its function is as follows. Catalyzes the hydrolysis of UDP-3-O-myristoyl-N-acetylglucosamine to form UDP-3-O-myristoylglucosamine and acetate, the committed step in lipid A biosynthesis. The chain is UDP-3-O-acyl-N-acetylglucosamine deacetylase from Polynucleobacter necessarius subsp. necessarius (strain STIR1).